Here is a 202-residue protein sequence, read N- to C-terminus: Alcohol dehydrogenase-related 31 kDa protein (202 aa).

11–34 (YVADCGGIALETSKVLMTKNIAKL) contributes to the NAD(+) binding site. Residue serine 139 coordinates substrate. Tyrosine 152 serves as the catalytic Proton acceptor.

The protein belongs to the short-chain dehydrogenases/reductases (SDR) family.

In Drosophila erecta (Fruit fly), this protein is Alcohol dehydrogenase-related 31 kDa protein (Adhr).